The chain runs to 273 residues: Probable NAD(P)H dehydrogenase (quinone) FQR1-like 2 (273 aa).

The interval 1–60 is disordered; sequence MGKGGGCVPSKKKKPATTGDGPGIDDDNDATNAPIQIDDDQTTIDGDRTTATNTGGTTTP. The segment covering 49-60 has biased composition (low complexity); that stretch reads TTATNTGGTTTP. The Flavodoxin-like domain maps to 75–263; the sequence is IFVVFYSMYG…ALAEHQGNYM (189 aa). FMN is bound by residues 81–85, 183–236, and His207; these read SMYGH and FFVS…SPYG. Tyr83 is a binding site for NAD(+).

The protein belongs to the WrbA family. FMN is required as a cofactor.

The protein resides in the cell membrane. The enzyme catalyses a quinone + NADH + H(+) = a quinol + NAD(+). It carries out the reaction a quinone + NADPH + H(+) = a quinol + NADP(+). Functionally, catalyzes the transfer of electrons from NADH and NADPH to reduce quinone to the hydroquinone state. The protein is Probable NAD(P)H dehydrogenase (quinone) FQR1-like 2 of Arabidopsis thaliana (Mouse-ear cress).